We begin with the raw amino-acid sequence, 220 residues long: 7-cyano-7-deazaguanine synthase (220 aa).

Residue 10-20 (FSGGQDSTTCL) participates in ATP binding. Zn(2+)-binding residues include cysteine 186, cysteine 195, cysteine 198, and cysteine 201.

The protein belongs to the QueC family. In terms of assembly, homodimer. It depends on Zn(2+) as a cofactor.

It catalyses the reaction 7-carboxy-7-deazaguanine + NH4(+) + ATP = 7-cyano-7-deazaguanine + ADP + phosphate + H2O + H(+). It participates in purine metabolism; 7-cyano-7-deazaguanine biosynthesis. Functionally, catalyzes the ATP-dependent conversion of 7-carboxy-7-deazaguanine (CDG) to 7-cyano-7-deazaguanine (preQ(0)). In Bacillus anthracis (strain A0248), this protein is 7-cyano-7-deazaguanine synthase.